A 393-amino-acid polypeptide reads, in one-letter code: S-adenosylmethionine synthase 2 (393 aa).

Mg(2+) is bound at residue glutamate 9. Histidine 15 lines the ATP pocket. Glutamate 43 serves as a coordination point for K(+). L-methionine-binding residues include glutamate 56 and glutamine 99. Residues 167-169 (DGK), 235-238 (SGRF), aspartate 246, 252-253 (RM), alanine 269, lysine 273, and lysine 277 each bind ATP. Aspartate 246 serves as a coordination point for L-methionine. An L-methionine-binding site is contributed by lysine 277.

This sequence belongs to the AdoMet synthase family. In terms of assembly, homotetramer. Mn(2+) serves as cofactor. It depends on Mg(2+) as a cofactor. Requires Co(2+) as cofactor. K(+) is required as a cofactor.

It localises to the cytoplasm. It carries out the reaction L-methionine + ATP + H2O = S-adenosyl-L-methionine + phosphate + diphosphate. It participates in amino-acid biosynthesis; S-adenosyl-L-methionine biosynthesis; S-adenosyl-L-methionine from L-methionine: step 1/1. Its function is as follows. Catalyzes the formation of S-adenosylmethionine from methionine and ATP. The reaction comprises two steps that are both catalyzed by the same enzyme: formation of S-adenosylmethionine (AdoMet) and triphosphate, and subsequent hydrolysis of the triphosphate. The sequence is that of S-adenosylmethionine synthase 2 (SAMS2) from Daucus carota (Wild carrot).